The primary structure comprises 421 residues: Testin (421 aa).

The 108-residue stretch at 92–199 (MILTNPVAAK…GDVKLPCEMD (108 aa)) folds into the PET domain. The disordered stretch occupies residues 133 to 164 (EKQPVAGSEGAQYRKKQLAKQLPAHDQDPSKC). Positions 155–164 (PAHDQDPSKC) are enriched in basic and acidic residues. 3 consecutive LIM zinc-binding domains span residues 234-297 (YSCY…CDSE), 299-359 (PRCA…NHAV), and 362-421 (QGCH…KMMS).

Belongs to the prickle / espinas / testin family. In terms of assembly, interacts via LIM domain 1 with ZYX. Interacts (via LIM domain 3) with ENAH and VASP. Interacts with ALKBH4, talin, actin, alpha-actinin, GRIP1 and PXN. Interacts (via LIM domain 2) with ACTL7A (via N-terminus). Heterodimer with ACTL7A; the heterodimer interacts with ENAH to form a heterotrimer.

Its subcellular location is the cytoplasm. The protein localises to the cell junction. The protein resides in the focal adhesion. Functionally, scaffold protein that may play a role in cell adhesion, cell spreading and in the reorganization of the actin cytoskeleton. Plays a role in the regulation of cell proliferation. May act as a tumor suppressor. In Saimiri boliviensis boliviensis (Bolivian squirrel monkey), this protein is Testin (TES).